We begin with the raw amino-acid sequence, 357 residues long: 3-dehydroquinate synthase (357 aa).

NAD(+) contacts are provided by residues 104–108 (GVVGD), 128–129 (TT), K141, and 168–171 (FLET). E183, H243, and H260 together coordinate Zn(2+).

This sequence belongs to the sugar phosphate cyclases superfamily. Dehydroquinate synthase family. Requires NAD(+) as cofactor. It depends on Co(2+) as a cofactor. The cofactor is Zn(2+).

It is found in the cytoplasm. The enzyme catalyses 7-phospho-2-dehydro-3-deoxy-D-arabino-heptonate = 3-dehydroquinate + phosphate. Its pathway is metabolic intermediate biosynthesis; chorismate biosynthesis; chorismate from D-erythrose 4-phosphate and phosphoenolpyruvate: step 2/7. Its function is as follows. Catalyzes the conversion of 3-deoxy-D-arabino-heptulosonate 7-phosphate (DAHP) to dehydroquinate (DHQ). This Streptococcus pyogenes serotype M18 (strain MGAS8232) protein is 3-dehydroquinate synthase.